The following is a 538-amino-acid chain: Phospho-2-dehydro-3-deoxyheptonate aldolase 1, chloroplastic (538 aa).

A chloroplast-targeting transit peptide spans 1–74 (MALSSTSTTN…KPSKSSPPAA (74 aa)). The interval 55 to 82 (DSNKIPIVSDKPSKSSPPAATATTAPAP) is disordered. The span at 68 to 82 (KSSPPAATATTAPAP) shows a compositional bias: low complexity. At Thr75 the chain carries Blocked amino end (Thr).

It belongs to the class-II DAHP synthase family.

The protein resides in the plastid. It is found in the chloroplast. It catalyses the reaction D-erythrose 4-phosphate + phosphoenolpyruvate + H2O = 7-phospho-2-dehydro-3-deoxy-D-arabino-heptonate + phosphate. Its pathway is metabolic intermediate biosynthesis; chorismate biosynthesis; chorismate from D-erythrose 4-phosphate and phosphoenolpyruvate: step 1/7. Activation by tryptophan (a hysteretic factor). In Solanum tuberosum (Potato), this protein is Phospho-2-dehydro-3-deoxyheptonate aldolase 1, chloroplastic (SHKA).